A 158-amino-acid chain; its full sequence is Transcriptional regulator MraZ (158 aa).

SpoVT-AbrB domains follow at residues 5–52 (IYET…TFSS) and 91–134 (AVEC…SQAE).

This sequence belongs to the MraZ family. Forms oligomers.

Its subcellular location is the cytoplasm. It is found in the nucleoid. The chain is Transcriptional regulator MraZ from Geobacter sulfurreducens (strain ATCC 51573 / DSM 12127 / PCA).